The primary structure comprises 331 residues: Probable transcriptional regulatory protein At2g25830 (331 aa).

It belongs to the TACO1 family.

The polypeptide is Probable transcriptional regulatory protein At2g25830 (Arabidopsis thaliana (Mouse-ear cress)).